Here is a 473-residue protein sequence, read N- to C-terminus: Phosphatidylserine synthase 1 (473 aa).

Residue alanine 2 is modified to N-acetylalanine. Residues 2–35 (ASCVGSRTLSKDDVNYRMHFRMINEQQVEDITID) lie on the Cytoplasmic side of the membrane. Residues 36–56 (FFYRPHTITLLSFTIISLMYF) form a helical membrane-spanning segment. The Lumenal portion of the chain corresponds to 57-72 (AFTRDDSVPEDNIWRG). A helical transmembrane segment spans residues 73 to 93 (ILSVIFFFLIISVLAFPNGPF). Topologically, residues 94-102 (TRPHPALWR) are cytoplasmic. Residues 103-123 (MVFGLSVLYFLFLVFLLFLNF) traverse the membrane as a helical segment. At 124-186 (EQVKSLMYWL…AMKALLIRSY (63 aa)) the chain is on the lumenal side. Residues 187–207 (GLCWTISITWELTELFFMHLL) form a helical membrane-spanning segment. Topologically, residues 208–216 (PNFAECWWD) are cytoplasmic. Residues 217–237 (QVILDILLCNGGGIWLGMVVC) form a helical membrane-spanning segment. Residues 238–286 (RFLEMRTYHWASFKDIHTTTGKIKRAVLQFTPASWTYVRWFDPKSSFQR) are Lumenal-facing. The chain crosses the membrane as a helical span at residues 287–307 (VAGIYLFMIIWQLTELNTFFL). Topologically, residues 308–319 (KHIFVFQASHPL) are cytoplasmic. The chain crosses the membrane as a helical span at residues 320–342 (SWGRILFIGCITAPTVRQYYAYL). Topologically, residues 343–355 (TDTQCKRVGTQCW) are lumenal. A helical transmembrane segment spans residues 356 to 376 (VFGVIGFLEAIVCIKFGQDLF). Topologically, residues 377 to 383 (SKTQILY) are cytoplasmic. Residues 384–404 (VMLWLLCVAFTTFLCLYGMVW) traverse the membrane as a helical segment. Residues 405 to 473 (YAEHYGHREK…SKVTNGVGKK (69 aa)) lie on the Lumenal side of the membrane. Residues serine 417, serine 425, serine 442, and serine 454 each carry the phosphoserine modification. The segment at 428–473 (ISWHHGKGSKGSEDSPPKHSSNHESHSSRRRNRHSKSKVTNGVGKK) is disordered. A compositionally biased stretch (basic and acidic residues) spans 437 to 454 (KGSEDSPPKHSSNHESHS). Residues 455 to 464 (SRRRNRHSKS) show a composition bias toward basic residues.

It belongs to the phosphatidyl serine synthase family. As to expression, expressed in kidney, testis, lung, skeletal muscle, liver brain, heart and spleen with highest expression in testis, liver, heart and brain.

It is found in the endoplasmic reticulum membrane. It carries out the reaction a 1,2-diacyl-sn-glycero-3-phosphoethanolamine + L-serine = a 1,2-diacyl-sn-glycero-3-phospho-L-serine + ethanolamine. The enzyme catalyses a 1,2-diacyl-sn-glycero-3-phosphocholine + L-serine = a 1,2-diacyl-sn-glycero-3-phospho-L-serine + choline. The protein operates within phospholipid metabolism; phosphatidylserine biosynthesis. Its activity is regulated as follows. Potently inhibited by choline in the mitochondria-associated membrane (MAM). Very little inhibition by choline in the endoplasmic reticulum (ER) per se. In terms of biological role, catalyzes a base-exchange reaction in which the polar head group of phosphatidylethanolamine (PE) or phosphatidylcholine (PC) is replaced by L-serine. Catalyzes mainly the conversion of phosphatidylcholine. Also converts, in vitro and to a lesser extent, phosphatidylethanolamine. In Mus musculus (Mouse), this protein is Phosphatidylserine synthase 1 (Ptdss1).